The following is a 176-amino-acid chain: Sigma intracellular receptor 2 (176 aa).

Topologically, residues 1-9 are cytoplasmic; sequence MGAPATRRC. Residues 10–30 traverse the membrane as a helical segment; it reads VEWLLGLYFLSHIPITLFMDL. Positions 10–158 constitute an EXPERA domain; sequence VEWLLGLYFL…PYLLIPFILL (149 aa). The Lumenal segment spans residues 31-68; sequence QAVLPRELYPVEFRNLLKWYAKEFKDPLLQEPPAWFKS. The chain crosses the membrane as a helical span at residues 69-89; it reads FLFCELVFQLPFFPIATYAFL. Residues Val-75 and Gln-77 each coordinate cholesterol. The Cytoplasmic portion of the chain corresponds to 90 to 99; it reads KGSCKWIRTP. A helical transmembrane segment spans residues 100–120; it reads AIIYSVHTMTTLIPILSTFLF. The segment at 108–176 is required for interaction with Hst1/HTN1; that stretch reads MTTLIPILST…YKYEEKRKKK (69 aa). Residues 121–140 lie on the Lumenal side of the membrane; it reads EDFSKASGFKGQRPETLHER. Residues 141 to 161 form a helical membrane-spanning segment; the sequence is LTLVSVYAPYLLIPFILLIFM. Residues 162–176 are Cytoplasmic-facing; it reads LRSPYYKYEEKRKKK. Residues 172–176 carry the ER retention motif motif; sequence KRKKK.

This sequence belongs to the TMEM97/sigma-2 receptor family. In terms of assembly, homodimer. Interacts with NPC1; the interaction impairs NPC1-mediated cholesterol transport. Interacts with PGRMC1 and LDLR; the interaction increases LDL internalization. Interacts with histatin 1/HTN1; the interaction induces HTN1-stimulating wound healing. Interacts with TSPO. Forms a complex with TSPO and PGRMC1; the interaction occurs in MIA PaCa-2 cells but not in MCF7 cells. In terms of tissue distribution, widely expressed in normal tissues. Expressed in pancreatic, renal, breast, colon, ovarian surface epithelial (OSE) cells. Highly expressed in various proliferating cancer cells.

Its subcellular location is the rough endoplasmic reticulum membrane. The protein resides in the nucleus membrane. In terms of biological role, sigma-2 receptor which contributes to ameliorate dysfunctional cellular processes and slow degenerative progression by regulating cell functions including cholesterol biosynthesis/trafficking, membrane trafficking, autophagy, lipid membrane-bound protein trafficking, and receptor stabilization at the cell surface. Forms a ternary complex with PGRMC1 receptor and low density lipoprotein receptor/LDLR at the plasma membrane, which increases LDLR-mediated LDL cholesterol internalization. Decreases lysosomal sterol transporter NPC1 availability to the cell, probably through NPC1-binding, hence controlling lipid transport, including cholesterol and LBPA, outside of late endosome/lysosome. Binds regio- and stereoselective ligand 20(S)-hydroxycholesterol (20(S)-OHC) which enhances TMEM97-NPC1 interaction and decreases TMEM97-PGRMC1 and TMEM97-TSPO interactions, thereby linking OHC binding to cholesterol homeostasis. Also able to bind cholesterol. Binds histatin 1 (Hst 1)/HN1 salivary peptide at the ER membrane, which is critical for increasing mitochondria-ER contacts and stimulating Hst1 wound healing properties. May alter the activity of some cytochrome P450 proteins. Although shows homologies with sterol isomerases (EXPERA domain), not able to catalyze sterol isomerization. However, may act as sensors of these molecules. Acts as a quality control factor in the ER, promoting the proteolytic degradation of nonproductive and extramitochondrial precursor proteins in the ER membrane thus removing them from the ER surface. The polypeptide is Sigma intracellular receptor 2 (Homo sapiens (Human)).